The primary structure comprises 467 residues: UDP-N-acetylmuramate--L-alanine ligase (467 aa).

114–120 (GTHGKTT) lines the ATP pocket.

This sequence belongs to the MurCDEF family.

It is found in the cytoplasm. The catalysed reaction is UDP-N-acetyl-alpha-D-muramate + L-alanine + ATP = UDP-N-acetyl-alpha-D-muramoyl-L-alanine + ADP + phosphate + H(+). The protein operates within cell wall biogenesis; peptidoglycan biosynthesis. In terms of biological role, cell wall formation. This Nitrobacter winogradskyi (strain ATCC 25391 / DSM 10237 / CIP 104748 / NCIMB 11846 / Nb-255) protein is UDP-N-acetylmuramate--L-alanine ligase.